A 452-amino-acid polypeptide reads, in one-letter code: Pup--protein ligase (452 aa).

E9 is a binding site for Mg(2+). R53 lines the ATP pocket. Y55 is a binding site for Mg(2+). D57 serves as the catalytic Proton acceptor. Mg(2+) is bound at residue E63. Residues T66 and W419 each coordinate ATP.

It belongs to the Pup ligase/Pup deamidase family. Pup-conjugating enzyme subfamily.

It catalyses the reaction ATP + [prokaryotic ubiquitin-like protein]-L-glutamate + [protein]-L-lysine = ADP + phosphate + N(6)-([prokaryotic ubiquitin-like protein]-gamma-L-glutamyl)-[protein]-L-lysine.. The protein operates within protein degradation; proteasomal Pup-dependent pathway. It participates in protein modification; protein pupylation. Functionally, catalyzes the covalent attachment of the prokaryotic ubiquitin-like protein modifier Pup to the proteasomal substrate proteins, thereby targeting them for proteasomal degradation. This tagging system is termed pupylation. The ligation reaction involves the side-chain carboxylate of the C-terminal glutamate of Pup and the side-chain amino group of a substrate lysine. This chain is Pup--protein ligase, found in Rhodococcus erythropolis (strain PR4 / NBRC 100887).